The following is a 620-amino-acid chain: Delta(14)-sterol reductase LBR (620 aa).

In terms of domain architecture, Tudor spans 1–62; the sequence is MPGRKFADGE…DIKPLKSFKQ (62 aa). Over 1-215 the chain is Nuclear; it reads MPGRKFADGE…TPQRRDLEFG (215 aa). The interval 52–111 is disordered; sequence SDIKPLKSFKQRKSGSTSSSPSRRRSSRSRSRSRSRSPGRAPKGSRRSVSASYQADAKEK. Lysine 55 carries the post-translational modification N6-acetyllysine. 2 positions are modified to phosphoserine: serine 59 and serine 67. 2 positions are modified to phosphoserine; by CDK1: serine 71 and serine 86. The segment covering 73–88 has biased composition (basic residues); it reads SRRRSSRSRSRSRSRS. Serine 88 carries the post-translational modification Phosphoserine. O-linked (GlcNAc) serine glycosylation occurs at serine 96. A phosphoserine mark is found at serine 99 and serine 101. Threonine 123 is modified (phosphothreonine). A Phosphoserine modification is found at serine 133. Threonine 205 is subject to Phosphothreonine. The next 8 membrane-spanning stretches (helical) occupy residues 216–236, 263–283, 304–324, 331–351, 452–472, 486–506, 525–547, and 566–586; these read GVPGALLIMLGLPACVFLLLL, VCGVYLLWFFLQALFSLLPVG, LYAFILTSAAVGTAVFWDIEL, FLQFALAAIVFSVVLSVYLYA, IIHDGFGFMLAFGDLVWVPFT, DLSWPLTSVIIALKLCGYVIF, LAHLKTIPTSTWKSLLVSGWWGF, and PCGFNHILPYFYVIYFTALLI. N6-acetyllysine is present on residues lysine 599 and lysine 606.

Belongs to the ERG4/ERG24 family. In terms of assembly, interacts with CBX5. Interacts with DNA. Interaction with DNA is sequence independent with higher affinity for supercoiled and relaxed circular DNA than linear DNA. Interacts with lamin B. Interacts with CLNK. Interacts with TMEM147; promoting LBR localization to the nucleus inner membrane. In terms of processing, phosphorylated by CDK1 in mitosis when the inner nuclear membrane breaks down into vesicles that dissociate from the lamina and the chromatin. It is phosphorylated by different protein kinases in interphase when the membrane is associated with these structures. Phosphorylation of LBR and HP1 proteins may be responsible for some of the alterations in chromatin organization and nuclear structure which occur at various times during the cell cycle. Phosphorylated by SRPK1. In late anaphase LBR is dephosphorylated, probably by PP1 and/or PP2A, allowing reassociation with chromatin.

It is found in the nucleus inner membrane. It localises to the nucleus. The protein localises to the cytoplasm. Its subcellular location is the endoplasmic reticulum membrane. The catalysed reaction is 5alpha-cholest-8,14-dien-3beta-ol + NADPH + H(+) = 5alpha-cholest-8-en-3beta-ol + NADP(+). It catalyses the reaction 4,4-dimethyl-5alpha-cholesta-8,24-dien-3beta-ol + NADP(+) = 4,4-dimethyl-5alpha-cholesta-8,14,24-trien-3beta-ol + NADPH + H(+). It carries out the reaction 4,4-dimethyl-8,14-cholestadien-3beta-ol + NADPH + H(+) = 4,4-dimethyl-5alpha-cholest-8-en-3beta-ol + NADP(+). Its pathway is steroid biosynthesis; cholesterol biosynthesis. Its function is as follows. Catalyzes the reduction of the C14-unsaturated bond of lanosterol, as part of the metabolic pathway leading to cholesterol biosynthesis. Plays a critical role in myeloid cell cholesterol biosynthesis which is essential to both myeloid cell growth and functional maturation. Mediates the activation of NADPH oxidases, perhaps by maintaining critical levels of cholesterol required for membrane lipid raft formation during neutrophil differentiation. Anchors the lamina and the heterochromatin to the inner nuclear membrane. This is Delta(14)-sterol reductase LBR (Lbr) from Rattus norvegicus (Rat).